The sequence spans 127 residues: Large ribosomal subunit protein eL32 (127 aa).

Residues 38–48 (WRRPKGIDSKM) show a composition bias toward basic and acidic residues. Positions 38-66 (WRRPKGIDSKMRLKKKGKPRSPSIGWSSP) are disordered.

It belongs to the eukaryotic ribosomal protein eL32 family.

The polypeptide is Large ribosomal subunit protein eL32 (Thermococcus gammatolerans (strain DSM 15229 / JCM 11827 / EJ3)).